The chain runs to 264 residues: Phosphonates import ATP-binding protein PhnC (264 aa).

One can recognise an ABC transporter domain in the interval 8-255 (LQAENLRMTF…KLIEIYGPEF (248 aa)). 40-47 (GPSGSGKS) is an ATP binding site.

The protein belongs to the ABC transporter superfamily. Phosphonates importer (TC 3.A.1.9.1) family. The complex is composed of two ATP-binding proteins (PhnC), two transmembrane proteins (PhnE) and a solute-binding protein (PhnD).

Its subcellular location is the cell inner membrane. The catalysed reaction is phosphonate(out) + ATP + H2O = phosphonate(in) + ADP + phosphate + H(+). Functionally, part of the ABC transporter complex PhnCDE involved in phosphonates import. Responsible for energy coupling to the transport system. This Maricaulis maris (strain MCS10) (Caulobacter maris) protein is Phosphonates import ATP-binding protein PhnC.